We begin with the raw amino-acid sequence, 94 residues long: DNA-directed RNA polymerase subunit omega (94 aa).

This sequence belongs to the RNA polymerase subunit omega family. In terms of assembly, the RNAP catalytic core consists of 2 alpha, 1 beta, 1 beta' and 1 omega subunit. When a sigma factor is associated with the core the holoenzyme is formed, which can initiate transcription.

It catalyses the reaction RNA(n) + a ribonucleoside 5'-triphosphate = RNA(n+1) + diphosphate. Functionally, promotes RNA polymerase assembly. Latches the N- and C-terminal regions of the beta' subunit thereby facilitating its interaction with the beta and alpha subunits. The protein is DNA-directed RNA polymerase subunit omega of Parafrankia sp. (strain EAN1pec).